A 260-amino-acid chain; its full sequence is Acetyl-coenzyme A carboxylase carboxyl transferase subunit alpha (260 aa).

The CoA carboxyltransferase C-terminal domain occupies 1–235; that stretch reads MSAYDKVMAA…SNKILHSINK (235 aa).

Belongs to the AccA family. As to quaternary structure, acetyl-CoA carboxylase is a heterohexamer composed of biotin carboxyl carrier protein (AccB), biotin carboxylase (AccC) and two subunits each of ACCase subunit alpha (AccA) and ACCase subunit beta (AccD).

Its subcellular location is the cytoplasm. It catalyses the reaction N(6)-carboxybiotinyl-L-lysyl-[protein] + acetyl-CoA = N(6)-biotinyl-L-lysyl-[protein] + malonyl-CoA. It participates in lipid metabolism; malonyl-CoA biosynthesis; malonyl-CoA from acetyl-CoA: step 1/1. Its function is as follows. Component of the acetyl coenzyme A carboxylase (ACC) complex. First, biotin carboxylase catalyzes the carboxylation of biotin on its carrier protein (BCCP) and then the CO(2) group is transferred by the carboxyltransferase to acetyl-CoA to form malonyl-CoA. The protein is Acetyl-coenzyme A carboxylase carboxyl transferase subunit alpha of Ruminiclostridium cellulolyticum (strain ATCC 35319 / DSM 5812 / JCM 6584 / H10) (Clostridium cellulolyticum).